The following is a 207-amino-acid chain: DNA-directed RNA polymerase subunit alpha (207 aa).

It belongs to the RNA polymerase alpha chain family. In plastids the minimal PEP RNA polymerase catalytic core is composed of four subunits: alpha, beta, beta', and beta''. When a (nuclear-encoded) sigma factor is associated with the core the holoenzyme is formed, which can initiate transcription.

The protein resides in the plastid. Its subcellular location is the chloroplast. The enzyme catalyses RNA(n) + a ribonucleoside 5'-triphosphate = RNA(n+1) + diphosphate. In terms of biological role, DNA-dependent RNA polymerase catalyzes the transcription of DNA into RNA using the four ribonucleoside triphosphates as substrates. This chain is DNA-directed RNA polymerase subunit alpha (rpoA), found in Euglena anabaena (Euglenaria anabaena).